Here is a 133-residue protein sequence, read N- to C-terminus: Small ribosomal subunit protein uS9 (133 aa).

The disordered stretch occupies residues 111–133 (PRRSESKKFGGPGARARKQKSYR).

This sequence belongs to the universal ribosomal protein uS9 family.

The chain is Small ribosomal subunit protein uS9 from Methanosphaera stadtmanae (strain ATCC 43021 / DSM 3091 / JCM 11832 / MCB-3).